Reading from the N-terminus, the 376-residue chain is 1-acyl-sn-glycerol-3-phosphate acyltransferase gamma (376 aa).

The Cytoplasmic portion of the chain corresponds to 1 to 124; the sequence is MGLLAFLKTQ…LGSSKVLAKK (124 aa). The short motif at 96–101 is the HXXXXD motif element; that stretch reads HNFEID. A helical membrane pass occupies residues 125–145; the sequence is ELLYVPLIGWTWYFLEIVFCK. Over 146–316 the chain is Lumenal; it reads RKWEEDRDTV…TLLNFLSWAT (171 aa). A helical membrane pass occupies residues 317–339; that stretch reads ILLSPLFSFVLGVFASGSPLLIL. The Cytoplasmic portion of the chain corresponds to 340 to 376; sequence TFLGFVGAASFGVRRLIGVTEIEKGSSYGNQEFKKKE.

It belongs to the 1-acyl-sn-glycerol-3-phosphate acyltransferase family. Widely expressed with highest levels in testis, pancreas and kidney, followed by spleen, lung, adipose tissue and liver.

The protein localises to the endoplasmic reticulum membrane. Its subcellular location is the nucleus envelope. It catalyses the reaction a 1-acyl-sn-glycero-3-phosphate + an acyl-CoA = a 1,2-diacyl-sn-glycero-3-phosphate + CoA. It carries out the reaction pentadecanoyl-CoA + 1-(9Z-octadecenoyl)-sn-glycero-3-phosphate = 1-(9Z)-octadecenoyl-2-pentadecanoyl-sn-glycero-3-phosphate + CoA. The enzyme catalyses heptadecanoyl-CoA + 1-(9Z-octadecenoyl)-sn-glycero-3-phosphate = 1-(9Z)-octadecenoyl-2-heptadecanoyl-sn-glycero-3-phosphate + CoA. The catalysed reaction is 1-(9Z-octadecenoyl)-sn-glycero-3-phosphate + octadecanoyl-CoA = 1-(9Z-octadecenoyl)-2-octadecanoyl-sn-glycero-3-phosphate + CoA. It catalyses the reaction nonadecanoyl-CoA + 1-(9Z-octadecenoyl)-sn-glycero-3-phosphate = 1-(9Z)-octadecenoyl-2-nonadecanoyl-sn-glycero-3-phosphate + CoA. It carries out the reaction 1-(9Z-octadecenoyl)-sn-glycero-3-phosphate + (5Z,8Z,11Z,14Z)-eicosatetraenoyl-CoA = 1-(9Z)-octadecenoyl-2-(5Z,8Z,11Z,14Z)-eicosatetraenoyl-sn-glycero-3-phosphate + CoA. The enzyme catalyses 1-(9Z-octadecenoyl)-sn-glycero-3-phosphate + (9Z)-octadecenoyl-CoA = 1,2-di-(9Z-octadecenoyl)-sn-glycero-3-phosphate + CoA. The catalysed reaction is 1-(9Z-octadecenoyl)-sn-glycero-3-phosphate + (9Z,12Z)-octadecadienoyl-CoA = 1-(9Z)-octadecenoyl-2-(9Z,12Z)-octadecadienoyl-sn-glycero-3-phosphate + CoA. It catalyses the reaction 1-(9Z-octadecenoyl)-sn-glycero-3-phosphocholine + (5Z,8Z,11Z,14Z)-eicosatetraenoyl-CoA = 1-(9Z)-octadecenoyl-2-(5Z,8Z,11Z,14Z)-icosatetraenoyl-sn-glycero-3-phosphocholine + CoA. It carries out the reaction 1-(9Z-octadecenoyl)-sn-glycero-3-phospho-(1D-myo-inositol) + (5Z,8Z,11Z,14Z)-eicosatetraenoyl-CoA = 1-(9Z-octadecenoyl)-2-(5Z,8Z,11Z,14Z-eicosatetraenoyl)-sn-glycero-3-phospho-1D-myo-inositol + CoA. The enzyme catalyses 1-(9Z-octadecenoyl)-sn-glycero-3-phospho-L-serine + (5Z,8Z,11Z,14Z)-eicosatetraenoyl-CoA = 1-(9Z-octadecenoyl)-2-(5Z,8Z,11Z,14Z-eicosatetraenoyl)-sn-glycero-3-phospho-L-serine + CoA. The catalysed reaction is 1-hexadecanoyl-sn-glycero-3-phosphate + (9Z)-octadecenoyl-CoA = 1-hexadecanoyl-2-(9Z-octadecenoyl)-sn-glycero-3-phosphate + CoA. It catalyses the reaction 1-hexadecanoyl-sn-glycero-3-phosphate + (5Z,8Z,11Z,14Z)-eicosatetraenoyl-CoA = 1-hexadecanoyl-2-(5Z,8Z,11Z,14Z-eicosatetraenoyl)-sn-glycero-3-phosphate + CoA. It carries out the reaction 1-heptadecanoyl-sn-glycero-3-phosphate + (5Z,8Z,11Z,14Z)-eicosatetraenoyl-CoA = 1-heptadecanoyl-2-(5Z,8Z,11Z,14Z)-eicosatetraenoyl-sn-glycero-3-phosphate + CoA. The enzyme catalyses 1-octadecanoyl-sn-glycero-3-phosphate + (9Z)-octadecenoyl-CoA = 1-octadecanoyl-2-(9Z-octadecenoyl)-sn-glycero-3-phosphate + CoA. The catalysed reaction is 1-octadecanoyl-sn-glycero-3-phosphate + (5Z,8Z,11Z,14Z)-eicosatetraenoyl-CoA = 1-octadecanoyl-2-(5Z,8Z,11Z,14Z-eicosatetraenoyl)-sn-glycero-3-phosphate + CoA. It catalyses the reaction 1-(9Z-octadecenoyl)-sn-glycero-3-phosphate + hexadecanoyl-CoA = 1-hexadecanoyl-2-(9Z-octadecenoyl)-sn-glycero-3-phosphate + CoA. It carries out the reaction 1-O-(9Z-octadecenyl)-sn-glycero-3-phosphate + (5Z,8Z,11Z,14Z)-eicosatetraenoyl-CoA = 1-O-(9Z-octadecenyl)-2-(5Z,8Z,11Z,14Z-eicosatetraenoyl)-sn-glycero-3-phosphate + CoA. The enzyme catalyses a 1-acyl-sn-glycero-3-phospho-(1D-myo-inositol) + (5Z,8Z,11Z,14Z)-eicosatetraenoyl-CoA = a 1-acyl-2-(5Z,8Z,11Z,14Z-eicosatetraenoyl)-sn-glycero-3-phospho-(1D-myo-inositol) + CoA. It participates in phospholipid metabolism; CDP-diacylglycerol biosynthesis; CDP-diacylglycerol from sn-glycerol 3-phosphate: step 2/3. Converts 1-acyl-sn-glycerol-3-phosphate (lysophosphatidic acid or LPA) into 1,2-diacyl-sn-glycerol-3-phosphate (phosphatidic acid or PA) by incorporating an acyl moiety at the sn-2 position of the glycerol backbone. Acts on LPA containing saturated or unsaturated fatty acids C16:0-C20:4 at the sn-1 position using C18:1, C20:4 or C18:2-CoA as the acyl donor. Also acts on lysophosphatidylcholine, lysophosphatidylinositol and lysophosphatidylserine using C18:1 or C20:4-CoA. Has a preference for arachidonoyl-CoA as a donor. Also has a modest lysophosphatidylinositol acyltransferase (LPIAT) activity, converts lysophosphatidylinositol (LPI) into phosphatidylinositol. This Homo sapiens (Human) protein is 1-acyl-sn-glycerol-3-phosphate acyltransferase gamma (AGPAT3).